The sequence spans 207 residues: Thiamine-phosphate synthase (207 aa).

4-amino-2-methyl-5-(diphosphooxymethyl)pyrimidine contacts are provided by residues 36 to 40 (QLRMK) and Asn68. Mg(2+) contacts are provided by Asp69 and Asp88. Position 106 (Ser106) interacts with 4-amino-2-methyl-5-(diphosphooxymethyl)pyrimidine. 132-134 (TNT) provides a ligand contact to 2-[(2R,5Z)-2-carboxy-4-methylthiazol-5(2H)-ylidene]ethyl phosphate. Residue Lys135 coordinates 4-amino-2-methyl-5-(diphosphooxymethyl)pyrimidine. 2-[(2R,5Z)-2-carboxy-4-methylthiazol-5(2H)-ylidene]ethyl phosphate is bound by residues Gly162 and 182–183 (VS).

Belongs to the thiamine-phosphate synthase family. Requires Mg(2+) as cofactor.

The enzyme catalyses 2-[(2R,5Z)-2-carboxy-4-methylthiazol-5(2H)-ylidene]ethyl phosphate + 4-amino-2-methyl-5-(diphosphooxymethyl)pyrimidine + 2 H(+) = thiamine phosphate + CO2 + diphosphate. It carries out the reaction 2-(2-carboxy-4-methylthiazol-5-yl)ethyl phosphate + 4-amino-2-methyl-5-(diphosphooxymethyl)pyrimidine + 2 H(+) = thiamine phosphate + CO2 + diphosphate. The catalysed reaction is 4-methyl-5-(2-phosphooxyethyl)-thiazole + 4-amino-2-methyl-5-(diphosphooxymethyl)pyrimidine + H(+) = thiamine phosphate + diphosphate. It functions in the pathway cofactor biosynthesis; thiamine diphosphate biosynthesis; thiamine phosphate from 4-amino-2-methyl-5-diphosphomethylpyrimidine and 4-methyl-5-(2-phosphoethyl)-thiazole: step 1/1. Functionally, condenses 4-methyl-5-(beta-hydroxyethyl)thiazole monophosphate (THZ-P) and 2-methyl-4-amino-5-hydroxymethyl pyrimidine pyrophosphate (HMP-PP) to form thiamine monophosphate (TMP). The chain is Thiamine-phosphate synthase from Methanococcus maripaludis (strain C6 / ATCC BAA-1332).